The chain runs to 706 residues: MLELITDFSKKSFKNYSMKEELKFNAINIIYGVNGRGKTSLARGIKEIIEENNPDSLRYFYTDYIHELLLLEDSNKFKGVKATFGTKNVEIENKIIKLKNEVVDMTDTKKLLVEKRRKLRELINEIHKSRKGNLKIPLKSSNKSIEEVIAIYEKNLKDAKKIEHNIESIRNFVANDETLYNKYNSIYEVMIPSLKIETYDVDRLTKILQNNYTDIKIPSFEVIDWLRNGLELHNVEESICKFCGNNLNYNLIKEKIEIYLLNEKKKDFDYLKDVEKSIEQLSDNYEQYLSNIDIFVNELGVQKSVEESLGDSIDEIKRILKQKLGNMENDNLKFPSDDYITLISRLSEIEEECKEKKKIKLKELNKKTENINVIVTGSISLEILENQSIREELSSIQYEENECKKQEQLNEEINAKISKLHENQSDYNDFKIYLNGVFESINLHIRLKSDETTQNYYLYHDLENISLNIKDISEGEKNLIAFLFFYFELFEDEKQETIKSNIKTLIIDDPINSFDEANRFYVLELIKKVLKSKFNQIFIFTHSWNDFCDITYRLKGEDHNFYEVYKDHQGTSFLEKFKKVKTPYKKLFQEIYELSRKSQKDIVEEDCYYYHSINSIRRVFEEFLSFKLKNSDLAQKSNQPEIEEVYRKMTGNEMSNNKKIKLGSFLTIINVLSHKPYRAIDVIGSAKFLMRYIEDVDKAHYDAMKD.

Coiled-coil stretches lie at residues 86 to 162 (TKNV…AKKI), 269 to 299 (DYLK…VNEL), and 337 to 427 (DDYI…QSDY).

This is an uncharacterized protein from Staphylococcus aureus (strain MRSA252).